The chain runs to 544 residues: Chaperonin GroEL (544 aa).

Residues threonine 30–proline 33, lysine 51, aspartate 87–threonine 91, glycine 415, and aspartate 495 contribute to the ATP site.

It belongs to the chaperonin (HSP60) family. In terms of assembly, forms a cylinder of 14 subunits composed of two heptameric rings stacked back-to-back. Interacts with the co-chaperonin GroES.

The protein resides in the cytoplasm. It catalyses the reaction ATP + H2O + a folded polypeptide = ADP + phosphate + an unfolded polypeptide.. Together with its co-chaperonin GroES, plays an essential role in assisting protein folding. The GroEL-GroES system forms a nano-cage that allows encapsulation of the non-native substrate proteins and provides a physical environment optimized to promote and accelerate protein folding. This Neisseria meningitidis serogroup A / serotype 4A (strain DSM 15465 / Z2491) protein is Chaperonin GroEL.